The following is a 170-amino-acid chain: Large ribosomal subunit protein uL5 (170 aa).

Belongs to the universal ribosomal protein uL5 family. Part of the 50S ribosomal subunit; contacts the 5S rRNA and probably tRNA. Forms a bridge to the 30S subunit in the 70S ribosome.

Functionally, this is one of the proteins that bind and probably mediate the attachment of the 5S RNA into the large ribosomal subunit, where it forms part of the central protuberance. In the 70S ribosome it contacts protein S13 of the 30S subunit (bridge B1b), connecting the 2 subunits; this bridge is implicated in subunit movement. May contact the P site tRNA; the 5S rRNA and some of its associated proteins might help stabilize positioning of ribosome-bound tRNAs. In Thermoplasma volcanium (strain ATCC 51530 / DSM 4299 / JCM 9571 / NBRC 15438 / GSS1), this protein is Large ribosomal subunit protein uL5.